The chain runs to 285 residues: 3-methyl-2-oxobutanoate hydroxymethyltransferase (285 aa).

The interval 1-22 (MSEHNVYGAAQPAQPGQPAQPR) is disordered. Residues 8–21 (GAAQPAQPGQPAQP) are compositionally biased toward low complexity. Mg(2+)-binding residues include aspartate 66 and aspartate 105. 3-methyl-2-oxobutanoate-binding positions include 66-67 (DS), aspartate 105, and lysine 135. Glutamate 137 provides a ligand contact to Mg(2+). The active-site Proton acceptor is the glutamate 203.

The protein belongs to the PanB family. In terms of assembly, homodecamer; pentamer of dimers. Requires Mg(2+) as cofactor.

The protein localises to the cytoplasm. It carries out the reaction 3-methyl-2-oxobutanoate + (6R)-5,10-methylene-5,6,7,8-tetrahydrofolate + H2O = 2-dehydropantoate + (6S)-5,6,7,8-tetrahydrofolate. The protein operates within cofactor biosynthesis; (R)-pantothenate biosynthesis; (R)-pantoate from 3-methyl-2-oxobutanoate: step 1/2. Functionally, catalyzes the reversible reaction in which hydroxymethyl group from 5,10-methylenetetrahydrofolate is transferred onto alpha-ketoisovalerate to form ketopantoate. The polypeptide is 3-methyl-2-oxobutanoate hydroxymethyltransferase (Mycolicibacterium paratuberculosis (strain ATCC BAA-968 / K-10) (Mycobacterium paratuberculosis)).